The primary structure comprises 232 residues: Beta-casein (232 aa).

Positions 1–15 (MKVLILACRVALALA) are cleaved as a signal peptide. A phosphoserine mark is found at serine 30, serine 32, serine 33, and serine 34.

Belongs to the beta-casein family. Mammary gland specific. Secreted in milk.

Its subcellular location is the secreted. Functionally, important role in determination of the surface properties of the casein micelles. In Camelus dromedarius (Dromedary), this protein is Beta-casein (CSN2).